The primary structure comprises 157 residues: Methylamine utilization protein MauL (157 aa).

Its pathway is one-carbon metabolism; methylamine degradation. Its function is as follows. Probably involved in TTQ prosthetic group biosynthesis. In Methylobacillus flagellatus (strain ATCC 51484 / DSM 6875 / VKM B-1610 / KT), this protein is Methylamine utilization protein MauL (mauL).